The primary structure comprises 311 residues: Aspartate carbamoyltransferase catalytic subunit (311 aa).

Arginine 58 and threonine 59 together coordinate carbamoyl phosphate. Lysine 86 serves as a coordination point for L-aspartate. 3 residues coordinate carbamoyl phosphate: arginine 108, histidine 136, and glutamine 139. Positions 169 and 224 each coordinate L-aspartate. Glycine 265 and proline 266 together coordinate carbamoyl phosphate.

This sequence belongs to the aspartate/ornithine carbamoyltransferase superfamily. ATCase family. As to quaternary structure, heterododecamer (2C3:3R2) of six catalytic PyrB chains organized as two trimers (C3), and six regulatory PyrI chains organized as three dimers (R2).

It carries out the reaction carbamoyl phosphate + L-aspartate = N-carbamoyl-L-aspartate + phosphate + H(+). The protein operates within pyrimidine metabolism; UMP biosynthesis via de novo pathway; (S)-dihydroorotate from bicarbonate: step 2/3. Functionally, catalyzes the condensation of carbamoyl phosphate and aspartate to form carbamoyl aspartate and inorganic phosphate, the committed step in the de novo pyrimidine nucleotide biosynthesis pathway. The sequence is that of Aspartate carbamoyltransferase catalytic subunit from Geobacter sulfurreducens (strain ATCC 51573 / DSM 12127 / PCA).